Reading from the N-terminus, the 599-residue chain is Cytochrome P450 monooxygenase ALT8 (599 aa).

Helical transmembrane passes span 4-21 and 36-56; these read LACVGAAAMACALAVYLG and ILFGCSGLWYVWKGLLWPAYF. The N-linked (GlcNAc...) asparagine glycan is linked to N127. A compositionally biased stretch (low complexity) spans 495–504; sequence DDSSAASPSF. The interval 495–522 is disordered; it reads DDSSAASPSFGGSGKRKSQYTDTHKEPS. C539 contacts heme.

This sequence belongs to the cytochrome P450 family. Heme serves as cofactor.

The protein localises to the membrane. Its pathway is secondary metabolite biosynthesis. Its function is as follows. Cytochrome P450 monooxygenase; part of the gene cluster that mediates the biosynthesis of the host-selective toxins (HSTs) AAL-toxins, sphinganine-analog mycotoxins responsible for Alternaria stem canker on tomato by the tomato pathotype. The biosynthesis starts with the polyketide synthase ALT1-catalyzed C-16 carbon chain assembly from one starter acetyl-CoA unit with malonyl-CoA extender units. ALT1 also selectively transfers methyl groups at the first and the third cycle of chain elongation for AAL toxin. The C-16 polyketide chain is released from the enzyme by a nucleophilic attack of a carbanion, which is derived from R-carbon of glycin by decarboxylation, on the carbonyl carbon of polyketide acyl chain. This step is probably catalyzed by a pyridoxal 5'-phosphate-dependent aminoacyl transferase ALT4. The respective functions of the other enzymes encoded by the cluster have still to be elucidated. The sphingosine N-acyltransferase-like protein ALT7 seems not to act as a resistance/self-tolerance factor against the toxin in the toxin biosynthetic gene cluster, contrary to what is expected. The protein is Cytochrome P450 monooxygenase ALT8 of Alternaria alternata (Alternaria rot fungus).